We begin with the raw amino-acid sequence, 411 residues long: Argininosuccinate synthase (411 aa).

Residues 11-19 and Ala37 contribute to the ATP site; that span reads AYSGGLDTS. L-citrulline contacts are provided by Tyr88 and Ser93. Residue 116 to 124 coordinates ATP; sequence SHGATGKGN. L-aspartate-binding residues include Thr120, Asn124, and Asp125. L-citrulline is bound at residue Asn124. Positions 128, 181, 190, 271, and 283 each coordinate L-citrulline.

The protein belongs to the argininosuccinate synthase family. Homotetramer.

It localises to the cytoplasm. It is found in the cytosol. The enzyme catalyses L-citrulline + L-aspartate + ATP = 2-(N(omega)-L-arginino)succinate + AMP + diphosphate + H(+). The protein operates within amino-acid biosynthesis; L-arginine biosynthesis; L-arginine from L-ornithine and carbamoyl phosphate: step 2/3. Its pathway is nitrogen metabolism; urea cycle; (N(omega)-L-arginino)succinate from L-aspartate and L-citrulline: step 1/1. One of the enzymes of the urea cycle, the metabolic pathway transforming neurotoxic amonia produced by protein catabolism into inocuous urea in the liver of ureotelic animals. Catalyzes the formation of arginosuccinate from aspartate, citrulline and ATP and together with ASL it is responsible for the biosynthesis of arginine in most body tissues. This chain is Argininosuccinate synthase, found in Xenopus laevis (African clawed frog).